The primary structure comprises 263 residues: Aminoglycoside 3'-phosphotransferase (263 aa).

The active-site Proton acceptor is D183.

Belongs to the aminoglycoside phosphotransferase family.

The catalysed reaction is kanamycin A + ATP = kanamycin 3'-phosphate + ADP + H(+). Its function is as follows. Resistance to kanamycin and structurally-related aminoglycosides, including amikacin. In Streptomyces ribosidificus, this protein is Aminoglycoside 3'-phosphotransferase (rph).